Consider the following 94-residue polypeptide: MITRNDVEYVANLARLTLTEEEIEKMTKELGAIIEFANKLSDLDTEGIEPTAHVLNLYNVFRSDEVKPSYPREEILKNAPSHDDVCIKVPKIVE.

Belongs to the GatC family. In terms of assembly, heterotrimer of A, B and C subunits.

The enzyme catalyses L-glutamyl-tRNA(Gln) + L-glutamine + ATP + H2O = L-glutaminyl-tRNA(Gln) + L-glutamate + ADP + phosphate + H(+). It catalyses the reaction L-aspartyl-tRNA(Asn) + L-glutamine + ATP + H2O = L-asparaginyl-tRNA(Asn) + L-glutamate + ADP + phosphate + 2 H(+). Allows the formation of correctly charged Asn-tRNA(Asn) or Gln-tRNA(Gln) through the transamidation of misacylated Asp-tRNA(Asn) or Glu-tRNA(Gln) in organisms which lack either or both of asparaginyl-tRNA or glutaminyl-tRNA synthetases. The reaction takes place in the presence of glutamine and ATP through an activated phospho-Asp-tRNA(Asn) or phospho-Glu-tRNA(Gln). The sequence is that of Aspartyl/glutamyl-tRNA(Asn/Gln) amidotransferase subunit C from Caldicellulosiruptor saccharolyticus (strain ATCC 43494 / DSM 8903 / Tp8T 6331).